A 190-amino-acid chain; its full sequence is Myosin, light chain 1, alkali; skeletal, fast (190 aa).

Residues 1-17 (MAPKKDAKKPEPPKKAE) are compositionally biased toward basic and acidic residues. The segment at 1–33 (MAPKKDAKKPEPPKKAEPAPAPAPAPEPPKADA) is disordered. Residues 19-28 (APAPAPAPEP) are compositionally biased toward pro residues. EF-hand domains are found at residues 46 to 81 (DQME…LGQN) and 123 to 158 (ATYD…LGEK).

In terms of assembly, myosin is a hexamer of 2 heavy chains and 4 light chains. Does not bind calcium. As to expression, expressed in fast muscle fibers during skeletal muscle differentiation.

Functionally, non-regulatory myosin light chain required for proper formation and/or maintenance of myofibers, and thus appropriate muscle function. The protein is Myosin, light chain 1, alkali; skeletal, fast of Danio rerio (Zebrafish).